The sequence spans 125 residues: Methylglyoxal synthase (125 aa).

The MGS-like domain maps to 1 to 125 (MTQRLRIALI…TAEKLVRALD (125 aa)). Residues His12, Lys16, 38–41 (TGTT), and 59–60 (SG) contribute to the substrate site. The active-site Proton donor/acceptor is Asp65. Residue His92 coordinates substrate.

This sequence belongs to the methylglyoxal synthase family.

It catalyses the reaction dihydroxyacetone phosphate = methylglyoxal + phosphate. Functionally, catalyzes the formation of methylglyoxal from dihydroxyacetone phosphate. In Brucella abortus (strain S19), this protein is Methylglyoxal synthase.